The following is a 356-amino-acid chain: Dihydroorotate dehydrogenase (quinone) (356 aa).

Residues 66–70 and threonine 90 each bind FMN; that span reads AGFDK. Lysine 70 serves as a coordination point for substrate. A substrate-binding site is contributed by 115-119; the sequence is NRMGF. Residues asparagine 143 and asparagine 176 each coordinate FMN. A substrate-binding site is contributed by asparagine 176. Catalysis depends on serine 179, which acts as the Nucleophile. Asparagine 181 is a binding site for substrate. Lysine 212 and threonine 240 together coordinate FMN. 241–242 contacts substrate; sequence NT. Residues glycine 266, glycine 295, and 316–317 contribute to the FMN site; that span reads YT.

The protein belongs to the dihydroorotate dehydrogenase family. Type 2 subfamily. As to quaternary structure, monomer. It depends on FMN as a cofactor.

Its subcellular location is the cell membrane. It catalyses the reaction (S)-dihydroorotate + a quinone = orotate + a quinol. It functions in the pathway pyrimidine metabolism; UMP biosynthesis via de novo pathway; orotate from (S)-dihydroorotate (quinone route): step 1/1. Functionally, catalyzes the conversion of dihydroorotate to orotate with quinone as electron acceptor. The polypeptide is Dihydroorotate dehydrogenase (quinone) (Rhodococcus opacus (strain B4)).